The primary structure comprises 319 residues: Mas-related G-protein coupled receptor member D (319 aa).

The Extracellular portion of the chain corresponds to 1–30; it reads MNYTPYSSPAPGLTISPTMDPVTWVYFSVT. The helical transmembrane segment at 31 to 51 threads the bilayer; it reads FLAMATCVCGIVGNSMVIWLL. The Cytoplasmic segment spans residues 52 to 64; that stretch reads SFHRVQRSPFCTY. A helical membrane pass occupies residues 65 to 85; the sequence is VLNLAVADLLFLLCMASLLSL. Topologically, residues 86–92 are extracellular; the sequence is ETGPLLT. Residues 93–113 traverse the membrane as a helical segment; the sequence is ASTSARVYEGMKRIKYFAYTA. The Cytoplasmic portion of the chain corresponds to 114-144; it reads GLSLLTAISTQRCLSVLFPIWYKCHRPQHLS. Residues 145–165 form a helical membrane-spanning segment; it reads GVVCGVLWALALLMNFLASFF. Residues 166-184 lie on the Extracellular side of the membrane; it reads CVQFWHPDKYQCFKVDMVF. Residues 185 to 205 form a helical membrane-spanning segment; it reads NSLILGIFMPVMVLTSAIIFI. Residues 206–220 lie on the Cytoplasmic side of the membrane; sequence RMRKNSLLQRRQPRR. A helical membrane pass occupies residues 221 to 241; it reads LYVVILTSVLVFLTCSLPLGI. Topologically, residues 242–260 are extracellular; the sequence is NWFLLYWVELPQAVRLLYV. Residues 261–281 form a helical membrane-spanning segment; the sequence is CSSRFSSSLSSSANPVIYFLV. The Cytoplasmic portion of the chain corresponds to 282–319; it reads GSQKSHRLQESLGAVLGRALQDEPEGRETPSTCTNDGV.

It belongs to the G-protein coupled receptor 1 family. Mas subfamily. Co-expressed in the small diameter neurons with P2X3 and VR1 in dorsal root ganglia.

The protein resides in the cell membrane. Functionally, may regulate nociceptor function and/or development, including the sensation or modulation of pain. Functions as a specific membrane receptor for beta-alanine. The receptor couples with G-protein G(q) and G(i). The chain is Mas-related G-protein coupled receptor member D (Mrgprd) from Rattus norvegicus (Rat).